The following is a 99-amino-acid chain: Malonate decarboxylase acyl carrier protein (99 aa).

Ser25 carries the post-translational modification O-(phosphoribosyl dephospho-coenzyme A)serine.

It belongs to the MdcC family. Covalently binds the prosthetic group of malonate decarboxylase.

It localises to the cytoplasm. Its function is as follows. Subunit of malonate decarboxylase, it is an acyl carrier protein to which acetyl and malonyl thioester residues are bound via a 2'-(5''-phosphoribosyl)-3'-dephospho-CoA prosthetic group and turn over during the catalytic mechanism. This is Malonate decarboxylase acyl carrier protein from Stutzerimonas stutzeri (strain A1501) (Pseudomonas stutzeri).